A 116-amino-acid polypeptide reads, in one-letter code: Iron-sulfur cluster insertion protein ErpA (116 aa).

Iron-sulfur cluster is bound by residues cysteine 44, cysteine 108, and cysteine 110.

The protein belongs to the HesB/IscA family. As to quaternary structure, homodimer. It depends on iron-sulfur cluster as a cofactor.

In terms of biological role, required for insertion of 4Fe-4S clusters for at least IspG. This chain is Iron-sulfur cluster insertion protein ErpA, found in Shewanella oneidensis (strain ATCC 700550 / JCM 31522 / CIP 106686 / LMG 19005 / NCIMB 14063 / MR-1).